The sequence spans 361 residues: Probable dual-specificity RNA methyltransferase RlmN (361 aa).

Glu91 (proton acceptor) is an active-site residue. The 239-residue stretch at 97-335 (QHYGLSVCVT…CVVRQEHGTD (239 aa)) folds into the Radical SAM core domain. Cys104 and Cys340 are joined by a disulfide. 3 residues coordinate [4Fe-4S] cluster: Cys111, Cys115, and Cys118. Residues 163–164 (GE), Ser195, 218–220 (SLH), and Asn296 each bind S-adenosyl-L-methionine. Cys340 (S-methylcysteine intermediate) is an active-site residue.

This sequence belongs to the radical SAM superfamily. RlmN family. It depends on [4Fe-4S] cluster as a cofactor.

It is found in the cytoplasm. It catalyses the reaction adenosine(2503) in 23S rRNA + 2 reduced [2Fe-2S]-[ferredoxin] + 2 S-adenosyl-L-methionine = 2-methyladenosine(2503) in 23S rRNA + 5'-deoxyadenosine + L-methionine + 2 oxidized [2Fe-2S]-[ferredoxin] + S-adenosyl-L-homocysteine. The enzyme catalyses adenosine(37) in tRNA + 2 reduced [2Fe-2S]-[ferredoxin] + 2 S-adenosyl-L-methionine = 2-methyladenosine(37) in tRNA + 5'-deoxyadenosine + L-methionine + 2 oxidized [2Fe-2S]-[ferredoxin] + S-adenosyl-L-homocysteine. Functionally, specifically methylates position 2 of adenine 2503 in 23S rRNA and position 2 of adenine 37 in tRNAs. The polypeptide is Probable dual-specificity RNA methyltransferase RlmN (Streptococcus mutans serotype c (strain ATCC 700610 / UA159)).